The sequence spans 159 residues: NADH-quinone oxidoreductase subunit B (159 aa).

[4Fe-4S] cluster contacts are provided by C36, C37, C102, and C132.

The protein belongs to the complex I 20 kDa subunit family. NDH-1 is composed of 14 different subunits. Subunits NuoB, C, D, E, F, and G constitute the peripheral sector of the complex. The cofactor is [4Fe-4S] cluster.

It localises to the cell inner membrane. The enzyme catalyses a quinone + NADH + 5 H(+)(in) = a quinol + NAD(+) + 4 H(+)(out). Functionally, NDH-1 shuttles electrons from NADH, via FMN and iron-sulfur (Fe-S) centers, to quinones in the respiratory chain. The immediate electron acceptor for the enzyme in this species is believed to be ubiquinone. Couples the redox reaction to proton translocation (for every two electrons transferred, four hydrogen ions are translocated across the cytoplasmic membrane), and thus conserves the redox energy in a proton gradient. This Acidovorax ebreus (strain TPSY) (Diaphorobacter sp. (strain TPSY)) protein is NADH-quinone oxidoreductase subunit B.